Consider the following 94-residue polypeptide: Integration host factor subunit beta (94 aa).

This sequence belongs to the bacterial histone-like protein family. Heterodimer of an alpha and a beta chain.

This protein is one of the two subunits of integration host factor, a specific DNA-binding protein that functions in genetic recombination as well as in transcriptional and translational control. The sequence is that of Integration host factor subunit beta from Yersinia pseudotuberculosis serotype O:1b (strain IP 31758).